Here is a 553-residue protein sequence, read N- to C-terminus: Efflux pump mlcE (553 aa).

Basic and acidic residues predominate over residues 1–19 (MSEPLPPKEGEPRPQKEES). The interval 1-29 (MSEPLPPKEGEPRPQKEESQNDTLEATES) is disordered. A glycan (N-linked (GlcNAc...) asparagine) is linked at asparagine 21. 13 helical membrane passes run 41 to 61 (LVVA…SIIV), 77 to 96 (VGWY…PLAG), 101 to 121 (LLGL…GSVL), 136 to 156 (AVAG…LSTA), 164 to 184 (VLIG…PLLG), 196 to 216 (CFYI…VITI), 245 to 265 (LVGF…LEWG), 273 to 293 (SSVI…FVLW), 319 to 339 (LFMG…PIYF), 352 to 372 (VYML…GFAI), 376 to 396 (GYYL…AGLV), 440 to 460 (ALGI…FLDF), and 516 to 536 (TFYL…GMGW). Residue asparagine 543 is glycosylated (N-linked (GlcNAc...) asparagine).

Belongs to the major facilitator superfamily. TCR/Tet family.

It is found in the membrane. In terms of biological role, efflux pump; part of the gene cluster that mediates the biosynthesis of compactin, also known as mevastatin or ML-236B, and which acts as a potent competitive inhibitor of HMG-CoA reductase. This chain is Efflux pump mlcE, found in Penicillium citrinum.